The primary structure comprises 393 residues: Methylthioribose kinase (393 aa).

Residues N38, K53, and 107–109 each bind ATP; that span reads EDL. Position 225 (D225) interacts with substrate. 242–244 provides a ligand contact to ATP; that stretch reads DPE. R332 contributes to the substrate binding site.

Belongs to the methylthioribose kinase family. As to quaternary structure, homodimer.

It carries out the reaction 5-(methylsulfanyl)-D-ribose + ATP = 5-(methylsulfanyl)-alpha-D-ribose 1-phosphate + ADP + H(+). It functions in the pathway amino-acid biosynthesis; L-methionine biosynthesis via salvage pathway; S-methyl-5-thio-alpha-D-ribose 1-phosphate from S-methyl-5'-thioadenosine (hydrolase route): step 2/2. Functionally, catalyzes the phosphorylation of methylthioribose into methylthioribose-1-phosphate. This Bacillus cereus (strain ZK / E33L) protein is Methylthioribose kinase.